The primary structure comprises 558 residues: MNTINKYSKTITQDETQPAAQAMLYGIGLTEADMYKAQVGIVSTGYEGNTCNMHLNDLAKDVKFGVASENLVGLIFNTIGVSDGISNGTDGMRFSLVSRDIIADSIETVVSAQWYDAVLAVVGCDKNMPGSVMAMGRLNRPAIMIYGGSIHSGKWKGESLNIVSAFEALGKKFNNTITPEDFKGVIKNACPGAGACGGMYTANTMASAIEALGMSLPYSSSNPALSQEKKQECLDAGKAIRVLLEKDIKPKDIMTKKAFENAMTMVVVLGGSTNAVLHLIAMAHSVDIELTLQDFQKTSNNIPVLADLKPSGKYLMEDLHAVGGVPAVMKYLLENKLLHGDCLTVTGKTVAENLANIPSLHQGQTVFLPLKTPLKATGHLQILYGNLAPEGSVAKISGNEGDFFEGKAKVYNDEYTVIDGVKNGEVASGDVVVIRYCGPKGGPGMPEMLKPTSAIMGAGLGKNVALITDGRFSGGTHGFVVGHITPEAYDGGTIALVKDGDTITINTKNNTIQLKVSEEELTKRKSEWKQPKLKATKGVLYKYAQCVSSASKGCVTDN.

C51 lines the [2Fe-2S] cluster pocket. D83 contributes to the Mg(2+) binding site. C124 provides a ligand contact to [2Fe-2S] cluster. Residues D125 and K126 each contribute to the Mg(2+) site. K126 carries the post-translational modification N6-carboxylysine. Residue C196 coordinates [2Fe-2S] cluster. A Mg(2+)-binding site is contributed by E447. S473 acts as the Proton acceptor in catalysis.

Belongs to the IlvD/Edd family. In terms of assembly, homodimer. [2Fe-2S] cluster is required as a cofactor. It depends on Mg(2+) as a cofactor.

The enzyme catalyses (2R)-2,3-dihydroxy-3-methylbutanoate = 3-methyl-2-oxobutanoate + H2O. It carries out the reaction (2R,3R)-2,3-dihydroxy-3-methylpentanoate = (S)-3-methyl-2-oxopentanoate + H2O. It functions in the pathway amino-acid biosynthesis; L-isoleucine biosynthesis; L-isoleucine from 2-oxobutanoate: step 3/4. Its pathway is amino-acid biosynthesis; L-valine biosynthesis; L-valine from pyruvate: step 3/4. Its function is as follows. Functions in the biosynthesis of branched-chain amino acids. Catalyzes the dehydration of (2R,3R)-2,3-dihydroxy-3-methylpentanoate (2,3-dihydroxy-3-methylvalerate) into 2-oxo-3-methylpentanoate (2-oxo-3-methylvalerate) and of (2R)-2,3-dihydroxy-3-methylbutanoate (2,3-dihydroxyisovalerate) into 2-oxo-3-methylbutanoate (2-oxoisovalerate), the penultimate precursor to L-isoleucine and L-valine, respectively. In Flavobacterium psychrophilum (strain ATCC 49511 / DSM 21280 / CIP 103535 / JIP02/86), this protein is Dihydroxy-acid dehydratase.